Consider the following 481-residue polypeptide: Tetratricopeptide repeat protein 29 (481 aa).

The span at 1–18 shows a compositional bias: low complexity; it reads MASVGPVKTKTVTLKELT. Positions 1–53 are disordered; it reads MASVGPVKTKTVTLKELTPPIPSPEKSACKGAKPDSNHMALVPVKPSQPGSGK. 6 TPR repeats span residues 191-224, 231-264, 271-310, 317-350, 357-390, and 397-430; these read CERCQLLADYFESERDCDEAAWHYDVALRIAMES, QEVRLSFGAFFERHKQLRKAIALFEEVYHLAMAL, VEANYRLIRTYLSLSAELKDTNPKEAISFLERALDMSQRV, ADSLHALGNIYESMGDFRRALEYQKRFFEVARAA, KRASLCVASMQERMNMTDEAVHSLQCALELSEKA, and YRATMQLGQAYDSSGDHEKALMSYRANFGAARKL.

Interacts with TAX-1.

The protein localises to the cytoplasm. It localises to the cytoskeleton. Its subcellular location is the flagellum axoneme. Its function is as follows. Axonemal protein which is implicated in axonemal and/or peri-axonemal structure assembly and regulates flagellum assembly and beating. This is Tetratricopeptide repeat protein 29 from Trypanosoma brucei brucei (strain 927/4 GUTat10.1).